Consider the following 232-residue polypeptide: Aprataxin-like protein (232 aa).

The region spanning 38–160 (LKVYIESPES…MTLDHVSPSL (123 aa)) is the HIT domain. 3 interaction with DNA regions span residues 63–67 (DMFPK), 138–149 (HAGPSMNNLHLH), and 161–165 (KNSAH). The Nucleophile role is filled by histidine 147. Zn(2+) is bound by residues cysteine 200 and cysteine 203. The segment at 209-212 (RHFT) is interaction with DNA. Zn(2+) is bound by residues histidine 217 and glutamate 221.

In terms of assembly, monomer.

Its subcellular location is the nucleus. It is found in the cytoplasm. It carries out the reaction a 5'-end adenosine-5'-diphospho-5'-2'-deoxyribonucleoside-DNA + H2O = a 5'-end 5'-phospho-2'-deoxyribonucleoside-DNA + AMP + 2 H(+). The enzyme catalyses a 5'-end adenosine-5'-diphospho-5'-ribonucleoside-2'-deoxyribonucleotide-DNA + H2O = a 5'-end 5'-phospho-ribonucleoside-2'-deoxyribonucleotide-DNA + AMP + 2 H(+). The catalysed reaction is a 3'-end 2'-deoxyribonucleotide-3'-diphospho-5'-guanosine-DNA + H2O = a 3'-end 2'-deoxyribonucleotide 3'-phosphate-DNA + GMP + 2 H(+). Functionally, DNA-binding protein involved in single-strand DNA break repair, double-strand DNA break repair and base excision repair. Resolves abortive DNA ligation intermediates formed either at base excision sites, or when DNA ligases attempt to repair non-ligatable breaks induced by reactive oxygen species. Catalyzes the release of adenylate groups covalently linked to 5'-phosphate termini, resulting in the production of 5'-phosphate termini that can be efficiently rejoined. Likewise, catalyzes the release of 3'-linked guanosine (DNAppG) and inosine (DNAppI) from DNA, but has higher specific activity with 5'-linked adenosine (AppDNA). In Schizosaccharomyces pombe (strain 972 / ATCC 24843) (Fission yeast), this protein is Aprataxin-like protein (hnt3).